The sequence spans 338 residues: MITIEQLISQIEQRQPVLNKAELNAEQRRLSLKGIGNLMMANRQQLSFLANPHYLSSLANTHAGAVLITAEHHNEAPNDTVALIVASPYLAYASVSQLFARQPSVSGIHPTAVIADSAVIGNQVTIGAFCVIGEQVQIGDRSALQAHVVVEDNTAIGTDCVIKPQVVIGHDCIIGNHVRLHAGVSIGSEGFGFAPTRNPSVTGWERIAQLGRVLIGNHVRIGSQTCIDRGAIDDTVIGNHVIIDNLVQVAHNVRIGDGTAIAAHTGIAGSTSIGKRCIIGGAVGITGHIDITDDVTLSGMTMVTKSITTAGSYSSGTAAMPTTNWRRAAVRFRQLGRD.

Residue His251 is the Proton acceptor of the active site.

The protein belongs to the transferase hexapeptide repeat family. LpxD subfamily. Homotrimer.

It carries out the reaction a UDP-3-O-[(3R)-3-hydroxyacyl]-alpha-D-glucosamine + a (3R)-hydroxyacyl-[ACP] = a UDP-2-N,3-O-bis[(3R)-3-hydroxyacyl]-alpha-D-glucosamine + holo-[ACP] + H(+). Its pathway is bacterial outer membrane biogenesis; LPS lipid A biosynthesis. In terms of biological role, catalyzes the N-acylation of UDP-3-O-acylglucosamine using 3-hydroxyacyl-ACP as the acyl donor. Is involved in the biosynthesis of lipid A, a phosphorylated glycolipid that anchors the lipopolysaccharide to the outer membrane of the cell. This chain is UDP-3-O-acylglucosamine N-acyltransferase, found in Psychrobacter arcticus (strain DSM 17307 / VKM B-2377 / 273-4).